The chain runs to 183 residues: Histone deacetylase complex subunit SAP30L (183 aa).

Position 1 is an N-acetylmethionine (Met-1). Residues 1–10 (MNGFSTEEDS) are compositionally biased toward acidic residues. Residues 1-23 (MNGFSTEEDSREGPPAAPAAAAP) form a disordered region. 2 disulfide bridges follow: Cys-29-Cys-30 and Cys-38-Cys-74. An Atypical zinc finger spans residues 29–77 (CCLIEDGERCVRPAGNASFSKRVQKSISQKKLKLDIDKSVRHLYICDFH). Residue Lys-49 forms a Glycyl lysine isopeptide (Lys-Gly) (interchain with G-Cter in SUMO2) linkage. Residues 85-105 (RNKRKRKTSDDGGDSPEHDTD) are disordered. Residues 86–91 (NKRKRK) carry the Nuclear localization signal (NLS) motif. The segment at 88–90 (RKR) is important for DNA and phosphoinositide binding. The residue at position 92 (Thr-92) is a Phosphothreonine. Ser-93 and Ser-99 each carry phosphoserine. Position 104 is a phosphothreonine (Thr-104). Residues Lys-155, Lys-166, and Lys-175 each participate in a glycyl lysine isopeptide (Lys-Gly) (interchain with G-Cter in SUMO2) cross-link.

This sequence belongs to the SAP30 family. As to quaternary structure, interacts with components of the histone deacetylase complex SIN3A, HDAC1 and HDAC2. Binds histones and nucleosomes. Interacts with FEZ1. Detected in brain and ovary, and at lower levels in heart, small intestine, lung, kidney, skeletal muscle, stomach and spleen (at protein level). Ubiquitous; expressed in all tissues tested with highest levels in testis.

It is found in the nucleus. The protein resides in the nucleolus. Its function is as follows. Functions as a transcription repressor, probably via its interaction with histone deacetylase complexes. Involved in the functional recruitment of the class 1 Sin3-histone deacetylase complex (HDAC) to the nucleolus. Binds DNA, apparently without sequence-specificity, and bends bound double-stranded DNA. Binds phosphoinositol phosphates (phosphoinositol 3-phosphate, phosphoinositol 4-phosphate and phosphoinositol 5-phosphate) via the same basic sequence motif that mediates DNA binding and nuclear import. Functions as a transcription repressor; isoform 2 has lower transcription repressor activity than isoform 1 and isoform 3. Functionally, functions as a transcription repressor; its activity is marginally lower than that of isoform 1. This is Histone deacetylase complex subunit SAP30L (SAP30L) from Homo sapiens (Human).